A 372-amino-acid polypeptide reads, in one-letter code: N-methyl-L-tryptophan oxidase (372 aa).

4–34 (DLIIIGSGSVGAAAGYYATRAGLNVLMTDAH) contacts FAD. Cys308 carries the post-translational modification S-8alpha-FAD cysteine.

It belongs to the MSOX/MTOX family. MTOX subfamily. As to quaternary structure, monomer. The cofactor is FAD.

It carries out the reaction N(alpha)-methyl-L-tryptophan + O2 + H2O = L-tryptophan + formaldehyde + H2O2. In terms of biological role, catalyzes the oxidative demethylation of N-methyl-L-tryptophan. The protein is N-methyl-L-tryptophan oxidase of Escherichia coli O7:K1 (strain IAI39 / ExPEC).